Reading from the N-terminus, the 348-residue chain is Peptide-N(4)-(N-acetyl-beta-glucosaminyl)asparagine amidase (348 aa).

Zn(2+) contacts are provided by cysteine 116, cysteine 119, cysteine 151, and cysteine 154. Cysteine 177 functions as the Nucleophile in the catalytic mechanism. Active-site residues include histidine 204 and aspartate 221. Residue glutamate 224 participates in substrate binding. Residues 311-348 (PSATPTKEMQKLKISKTGNKGRISGSAEWKESRGENGK) form a disordered region. The segment covering 338-348 (EWKESRGENGK) has biased composition (basic and acidic residues).

The protein belongs to the transglutaminase-like superfamily. PNGase family. It depends on Zn(2+) as a cofactor.

The protein localises to the cytoplasm. It catalyses the reaction Hydrolysis of an N(4)-(acetyl-beta-D-glucosaminyl)asparagine residue in which the glucosamine residue may be further glycosylated, to yield a (substituted) N-acetyl-beta-D-glucosaminylamine and a peptide containing an aspartate residue.. In terms of biological role, specifically deglycosylates the denatured form of N-linked glycoproteins in the cytoplasm and assists their proteasome-mediated degradation. Cleaves the beta-aspartyl-glucosamine (GlcNAc) of the glycan and the amide side chain of Asn, converting Asn to Asp. Prefers proteins containing high-mannose over those bearing complex type oligosaccharides. Can recognize misfolded proteins in the endoplasmic reticulum that are exported to the cytosol to be destroyed and deglycosylate them, while it has no activity toward native proteins. Deglycosylation is a prerequisite for subsequent proteasome-mediated degradation of some, but not all, misfolded glycoproteins. The sequence is that of Peptide-N(4)-(N-acetyl-beta-glucosaminyl)asparagine amidase (PNG1) from Candida glabrata (strain ATCC 2001 / BCRC 20586 / JCM 3761 / NBRC 0622 / NRRL Y-65 / CBS 138) (Yeast).